The following is a 255-amino-acid chain: Taurine import ATP-binding protein TauB (255 aa).

The region spanning 2–229 (LQISHLYADY…RFVAGESSRS (228 aa)) is the ABC transporter domain. Position 34-41 (34-41 (GPSGCGKT)) interacts with ATP.

The protein belongs to the ABC transporter superfamily. Taurine importer (TC 3.A.1.17.1) family. The complex is composed of two ATP-binding proteins (TauB), two transmembrane proteins (TauC) and a solute-binding protein (TauA).

The protein resides in the cell inner membrane. It catalyses the reaction taurine(out) + ATP + H2O = taurine(in) + ADP + phosphate + H(+). In terms of biological role, part of the ABC transporter complex TauABC involved in taurine import. Responsible for energy coupling to the transport system. In Escherichia coli (strain K12), this protein is Taurine import ATP-binding protein TauB.